Here is a 399-residue protein sequence, read N- to C-terminus: uncharacterized protein (399 aa).

The next 5 membrane-spanning stretches (helical) occupy residues 26–46 (LLTIIGIVIGVLAMVSLISLG), 266–286 (VITIFVVGVAAISLLVGAVGI), 301–321 (IGILKALGAETTDILAIFVVE), 324–344 (FLGLFGGIVGLVLGILLAEVI), and 358–378 (AWISWELIVGVLIFSFLVGVI).

The protein belongs to the ABC-4 integral membrane protein family.

It is found in the cell membrane. This is an uncharacterized protein from Methanocaldococcus jannaschii (strain ATCC 43067 / DSM 2661 / JAL-1 / JCM 10045 / NBRC 100440) (Methanococcus jannaschii).